We begin with the raw amino-acid sequence, 92 residues long: Non-specific lipid-transfer protein 1 (92 aa).

Cystine bridges form between Cys4/Cys52, Cys14/Cys28, Cys29/Cys74, and Cys50/Cys88.

The protein belongs to the plant LTP family. Expressed in seeds and, at very low levels, in pulp of fruit (at protein level).

Plant non-specific lipid-transfer proteins transfer phospholipids as well as galactolipids across membranes. May play a role in wax or cutin deposition in the cell walls of expanding epidermal cells and certain secretory tissues. The polypeptide is Non-specific lipid-transfer protein 1 (Actinidia deliciosa (Kiwi)).